The primary structure comprises 445 residues: Trigger factor (445 aa).

The PPIase FKBP-type domain occupies Gly164 to Pro249.

It belongs to the FKBP-type PPIase family. Tig subfamily.

The protein resides in the cytoplasm. It carries out the reaction [protein]-peptidylproline (omega=180) = [protein]-peptidylproline (omega=0). Functionally, involved in protein export. Acts as a chaperone by maintaining the newly synthesized protein in an open conformation. Functions as a peptidyl-prolyl cis-trans isomerase. This is Trigger factor from Psychrobacter sp. (strain PRwf-1).